The sequence spans 215 residues: UPF0502 protein YceH (215 aa).

Lysine 80 carries the N6-acetyllysine modification.

Belongs to the UPF0502 family.

This is UPF0502 protein YceH from Escherichia coli O157:H7.